The following is a 389-amino-acid chain: 5-amino-6-(D-ribitylamino)uracil--L-tyrosine 4-hydroxyphenyl transferase (389 aa).

Positions 56–298 (VSYVINRNIN…QAVARLFFGR (243 aa)) constitute a Radical SAM core domain. [4Fe-4S] cluster contacts are provided by cysteine 70, cysteine 74, and cysteine 77.

This sequence belongs to the radical SAM superfamily. CofH family. Consists of two subunits, CofG and CofH. The cofactor is [4Fe-4S] cluster.

It catalyses the reaction 5-amino-6-(D-ribitylamino)uracil + L-tyrosine + S-adenosyl-L-methionine = 5-amino-5-(4-hydroxybenzyl)-6-(D-ribitylimino)-5,6-dihydrouracil + 2-iminoacetate + 5'-deoxyadenosine + L-methionine + H(+). It functions in the pathway cofactor biosynthesis; coenzyme F0 biosynthesis. Its function is as follows. Catalyzes the radical-mediated synthesis of 5-amino-5-(4-hydroxybenzyl)-6-(D-ribitylimino)-5,6-dihydrouracil from 5-amino-6-(D-ribitylamino)uracil and L-tyrosine. The sequence is that of 5-amino-6-(D-ribitylamino)uracil--L-tyrosine 4-hydroxyphenyl transferase from Gloeobacter violaceus (strain ATCC 29082 / PCC 7421).